The following is a 68-amino-acid chain: Medusin-DA1 (68 aa).

The signal sequence occupies residues 1–22 (MAFLKKSLFLVLFLGLVSLSVC). Residues 23 to 48 (EEEKRENEEEKNEQEEDDREERNEEK) constitute a propeptide that is removed on maturation. Residues 25-47 (EKRENEEEKNEQEEDDREERNEE) are disordered. Residues 31–41 (EEKNEQEEDDR) show a composition bias toward acidic residues. A Leucine amide modification is found at leucine 67.

The protein belongs to the frog skin active peptide (FSAP) family. Medusin subfamily. As to expression, expressed by the skin glands.

Its subcellular location is the secreted. Antimicrobial peptide with activity against Gram-positive bacteria (S.aureus, MIC=32 mg/L) and fungi (C.albicans, MIC=64 mg/L). Shows weak hemolytic activity. The chain is Medusin-DA1 from Agalychnis dacnicolor (Giant Mexican leaf frog).